Reading from the N-terminus, the 66-residue chain is uncharacterized protein (66 aa).

The HTH cro/C1-type domain maps to 5–59; that stretch reads LKYYRALHNLTQEDLAKKLGVSRQTIIAIEKGKYDPSLKLAFKIAKFFGVKIEDI. The H-T-H motif DNA-binding region spans 16-35; the sequence is QEDLAKKLGVSRQTIIAIEK.

This is an uncharacterized protein from Methanocaldococcus jannaschii (strain ATCC 43067 / DSM 2661 / JAL-1 / JCM 10045 / NBRC 100440) (Methanococcus jannaschii).